Consider the following 306-residue polypeptide: D-alanine--D-alanine ligase B (306 aa).

The region spanning 101 to 303 (KLLWQGAGLP…FSQLVVRILE (203 aa)) is the ATP-grasp domain. 134–189 (ISALGLPVIVKPSREGSSVGMSKVVAENALQDALRLAFQHDEEVLIEKWLSGPEFT) serves as a coordination point for ATP. Residues Asp257, Glu270, and Asn272 each contribute to the Mg(2+) site.

The protein belongs to the D-alanine--D-alanine ligase family. Mg(2+) serves as cofactor. The cofactor is Mn(2+).

It localises to the cytoplasm. It catalyses the reaction 2 D-alanine + ATP = D-alanyl-D-alanine + ADP + phosphate + H(+). The protein operates within cell wall biogenesis; peptidoglycan biosynthesis. Functionally, cell wall formation. In Shigella flexneri, this protein is D-alanine--D-alanine ligase B.